The sequence spans 325 residues: Protein ORANGE-GREEN, chloroplastic (325 aa).

The transit peptide at 1-54 (MDRVLVASYPINHLIRPHSFRIDYCWSTCFTSRLNSGKERQKLSSRWRWRSMAS) directs the protein to the chloroplast. Positions 53-71 (ASDSTDSSSSSSFAPSVES) are enriched in low complexity. The tract at residues 53–77 (ASDSTDSSSSSSFAPSVESDPSDKT) is disordered. The next 2 helical transmembrane spans lie at 164 to 184 (LYYV…GLLA) and 217 to 237 (IVAS…VVEV). Residues 226–317 (VGVISALMVV…CTGMAMASEH (92 aa)) are CR-type-like. The CXXCXGXG motif repeat unit spans residues 248-255 (CKYCLGTG). The stretch at 259 to 266 (CARCSNTG) is one CXXCXXXG motif repeat. The CXXCXGXG motif repeat unit spans residues 292–299 (CQNCSGSG). Residues 303 to 310 (CPTCLCTG) form a CXXCXXXG motif repeat.

It belongs to the orange-like family.

It localises to the plastid. The protein resides in the chloroplast membrane. Involved in chloroplast differentiation in fruit flesh. This chain is Protein ORANGE-GREEN, chloroplastic, found in Cucumis melo (Muskmelon).